Consider the following 226-residue polypeptide: MPTTKKTLMFLSSFFTSLGSFIVICSILGTQAWITSTIAVRDSASNGSIFITYGLFRGESSEELSHGLAEPKKKFAVLEILNNSSQKTLHSVTILFLVLSLITSLLSSGFTFYNSISNPYQTFLGPTGVYTWNGLGASFVFVTMILFVANTQSNQLSEELFQMLYPATTSKGTTHSYGYSFWLILLVILLNIVTVTIIIFYQKARYQRKQEQRKPMEYAPRDGILF.

A helical membrane pass occupies residues 8–28 (LMFLSSFFTSLGSFIVICSIL). N83 carries an N-linked (GlcNAc...) asparagine glycan. Transmembrane regions (helical) follow at residues 92 to 112 (VTIL…GFTF), 129 to 149 (VYTW…LFVA), and 181 to 201 (FWLI…IIFY).

It belongs to the clarin family.

It is found in the membrane. The protein is Clarin-3 (CLRN3) of Homo sapiens (Human).